Reading from the N-terminus, the 491-residue chain is Glycogen synthase (491 aa).

Lysine 15 contacts ADP-alpha-D-glucose.

It belongs to the glycosyltransferase 1 family. Bacterial/plant glycogen synthase subfamily.

It carries out the reaction [(1-&gt;4)-alpha-D-glucosyl](n) + ADP-alpha-D-glucose = [(1-&gt;4)-alpha-D-glucosyl](n+1) + ADP + H(+). The protein operates within glycan biosynthesis; glycogen biosynthesis. Synthesizes alpha-1,4-glucan chains using ADP-glucose. The protein is Glycogen synthase of Hydrogenovibrio crunogenus (strain DSM 25203 / XCL-2) (Thiomicrospira crunogena).